Consider the following 443-residue polypeptide: Chromosomal replication initiator protein DnaA (443 aa).

Residues 1–76 are domain I, interacts with DnaA modulators; it reads MMDAWPRCLE…GNGEVALAVG (76 aa). A domain II region spans residues 76–105; sequence GSRPRAPEPAPAPVAATIAPQAAPIAPFAG. The interval 106-323 is domain III, AAA+ region; sequence NLDSHYTFAN…GALNTLVARA (218 aa). Positions 151, 153, 154, and 155 each coordinate ATP. Positions 324–443 are domain IV, binds dsDNA; that stretch reads NFTGRSITVE…WEKLIRKLSE (120 aa).

The protein belongs to the DnaA family. As to quaternary structure, oligomerizes as a right-handed, spiral filament on DNA at oriC.

Its subcellular location is the cytoplasm. Functionally, plays an essential role in the initiation and regulation of chromosomal replication. ATP-DnaA binds to the origin of replication (oriC) to initiate formation of the DNA replication initiation complex once per cell cycle. Binds the DnaA box (a 9 base pair repeat at the origin) and separates the double-stranded (ds)DNA. Forms a right-handed helical filament on oriC DNA; dsDNA binds to the exterior of the filament while single-stranded (ss)DNA is stabiized in the filament's interior. The ATP-DnaA-oriC complex binds and stabilizes one strand of the AT-rich DNA unwinding element (DUE), permitting loading of DNA polymerase. After initiation quickly degrades to an ADP-DnaA complex that is not apt for DNA replication. Binds acidic phospholipids. This is Chromosomal replication initiator protein DnaA from Xanthomonas oryzae pv. oryzae (strain KACC10331 / KXO85).